Here is a 227-residue protein sequence, read N- to C-terminus: Phosphoribosylformylglycinamidine synthase subunit PurQ (227 aa).

In terms of domain architecture, Glutamine amidotransferase type-1 spans 2–226 (KFAVIQFPGS…VKAWKEEQVN (225 aa)). Cys-86 serves as the catalytic Nucleophile. Residues His-195 and Glu-197 contribute to the active site.

In terms of assembly, part of the FGAM synthase complex composed of 1 PurL, 1 PurQ and 2 PurS subunits.

It is found in the cytoplasm. The catalysed reaction is N(2)-formyl-N(1)-(5-phospho-beta-D-ribosyl)glycinamide + L-glutamine + ATP + H2O = 2-formamido-N(1)-(5-O-phospho-beta-D-ribosyl)acetamidine + L-glutamate + ADP + phosphate + H(+). It carries out the reaction L-glutamine + H2O = L-glutamate + NH4(+). Its pathway is purine metabolism; IMP biosynthesis via de novo pathway; 5-amino-1-(5-phospho-D-ribosyl)imidazole from N(2)-formyl-N(1)-(5-phospho-D-ribosyl)glycinamide: step 1/2. Part of the phosphoribosylformylglycinamidine synthase complex involved in the purines biosynthetic pathway. Catalyzes the ATP-dependent conversion of formylglycinamide ribonucleotide (FGAR) and glutamine to yield formylglycinamidine ribonucleotide (FGAM) and glutamate. The FGAM synthase complex is composed of three subunits. PurQ produces an ammonia molecule by converting glutamine to glutamate. PurL transfers the ammonia molecule to FGAR to form FGAM in an ATP-dependent manner. PurS interacts with PurQ and PurL and is thought to assist in the transfer of the ammonia molecule from PurQ to PurL. In Listeria monocytogenes serovar 1/2a (strain ATCC BAA-679 / EGD-e), this protein is Phosphoribosylformylglycinamidine synthase subunit PurQ.